A 361-amino-acid polypeptide reads, in one-letter code: Chorismate synthase (361 aa).

Residues R48 and R54 each coordinate NADP(+). FMN-binding positions include R125–S127, N238–A239, G278, K293–S297, and R319.

The protein belongs to the chorismate synthase family. In terms of assembly, homotetramer. FMNH2 serves as cofactor.

The enzyme catalyses 5-O-(1-carboxyvinyl)-3-phosphoshikimate = chorismate + phosphate. The protein operates within metabolic intermediate biosynthesis; chorismate biosynthesis; chorismate from D-erythrose 4-phosphate and phosphoenolpyruvate: step 7/7. Catalyzes the anti-1,4-elimination of the C-3 phosphate and the C-6 proR hydrogen from 5-enolpyruvylshikimate-3-phosphate (EPSP) to yield chorismate, which is the branch point compound that serves as the starting substrate for the three terminal pathways of aromatic amino acid biosynthesis. This reaction introduces a second double bond into the aromatic ring system. The chain is Chorismate synthase from Escherichia coli O7:K1 (strain IAI39 / ExPEC).